A 112-amino-acid chain; its full sequence is Small ribosomal subunit protein uS17 (112 aa).

Belongs to the universal ribosomal protein uS17 family. As to quaternary structure, part of the 30S ribosomal subunit.

One of the primary rRNA binding proteins, it binds specifically to the 5'-end of 16S ribosomal RNA. In Haloarcula marismortui (strain ATCC 43049 / DSM 3752 / JCM 8966 / VKM B-1809) (Halobacterium marismortui), this protein is Small ribosomal subunit protein uS17.